The sequence spans 212 residues: Peptide methionine sulfoxide reductase MsrA (212 aa).

Residues 1 to 14 (MSSIDKTQRITQSD) show a composition bias toward polar residues. A disordered region spans residues 1-21 (MSSIDKTQRITQSDALPGRST). Residue C52 is part of the active site.

It belongs to the MsrA Met sulfoxide reductase family.

It carries out the reaction L-methionyl-[protein] + [thioredoxin]-disulfide + H2O = L-methionyl-(S)-S-oxide-[protein] + [thioredoxin]-dithiol. The enzyme catalyses [thioredoxin]-disulfide + L-methionine + H2O = L-methionine (S)-S-oxide + [thioredoxin]-dithiol. Functionally, has an important function as a repair enzyme for proteins that have been inactivated by oxidation. Catalyzes the reversible oxidation-reduction of methionine sulfoxide in proteins to methionine. In Pectobacterium carotovorum subsp. carotovorum (strain PC1), this protein is Peptide methionine sulfoxide reductase MsrA.